We begin with the raw amino-acid sequence, 240 residues long: Adenylate dimethylallyltransferase (240 aa).

This sequence belongs to the isopentenyl transferase family.

It catalyses the reaction dimethylallyl diphosphate + AMP = N(6)-(dimethylallyl)adenosine 5'-phosphate + diphosphate. Functionally, transfers dimethylallyl groups to AMP as part of the biosynthesis of cytokinin phytohormones. This is Adenylate dimethylallyltransferase (izt) from Agrobacterium tumefaciens (strain Ach5).